A 198-amino-acid polypeptide reads, in one-letter code: MFYPEPVSKLIDGFMKLPGIGPKTAGRLAFFVLNMKEDDVLDLAKALVNAKRQLHYCSVCNNITDLDPCHICRDKRRDGSIICVVQEPRDVVAMEKTREFEGYYHVLHGAISPMDGIGPEDIRIPDLLKRLGDEQVKEVILATNPNIEGEATAMYISRLIKPFGIRVTRIAHGLPVGGDLEYADEVTLTKALEGRRDL.

The C4-type zinc-finger motif lies at 57-72 (CSVCNNITDLDPCHIC). In terms of domain architecture, Toprim spans 80–175 (SIICVVQEPR…RVTRIAHGLP (96 aa)).

The protein belongs to the RecR family.

Functionally, may play a role in DNA repair. It seems to be involved in an RecBC-independent recombinational process of DNA repair. It may act with RecF and RecO. The chain is Recombination protein RecR from Brevibacillus brevis (strain 47 / JCM 6285 / NBRC 100599).